We begin with the raw amino-acid sequence, 568 residues long: Sphingosine-1-phosphate lyase 1 (568 aa).

Topologically, residues 1–41 (MPSTDLLTLKAFEPYLEILEVYSTKAKNYVNGHCTKYEPWQ) are lumenal. Residues 42-62 (LIAWSVVWTLLIVWGYEFVFQ) form a helical; Signal-anchor for type III membrane protein membrane-spanning segment. Residues 63-568 (PESLWSRFKK…SQMNGSPKPH (506 aa)) lie on the Cytoplasmic side of the membrane. At Lys353 the chain carries N6-(pyridoxal phosphate)lysine; alternate. The residue at position 353 (Lys353) is an N6-acetyllysine; alternate. 3'-nitrotyrosine is present on residues Tyr356 and Tyr366. A Phosphoserine modification is found at Ser564.

Belongs to the group II decarboxylase family. Sphingosine-1-phosphate lyase subfamily. In terms of assembly, homodimer. Pyridoxal 5'-phosphate is required as a cofactor.

The protein resides in the endoplasmic reticulum membrane. The enzyme catalyses sphinganine 1-phosphate = hexadecanal + phosphoethanolamine. It catalyses the reaction sphing-4-enine 1-phosphate = (2E)-hexadecenal + phosphoethanolamine. It functions in the pathway lipid metabolism; sphingolipid metabolism. Cleaves phosphorylated sphingoid bases (PSBs), such as sphingosine-1-phosphate, into fatty aldehydes and phosphoethanolamine. Elevates stress-induced ceramide production and apoptosis. Required for global lipid homeostasis in liver and cholesterol homeostasis in fibroblasts. Involved in the regulation of pro-inflammatory response and neutrophil trafficking. Modulates neuronal autophagy via phosphoethanolamine production which regulates accumulation of aggregate-prone proteins such as APP. Seems to play a role in establishing neuronal contact sites and axonal maintenance. The polypeptide is Sphingosine-1-phosphate lyase 1 (Pongo abelii (Sumatran orangutan)).